Consider the following 716-residue polypeptide: ATP-dependent DNA helicase DinG (716 aa).

The interval 1–114 is HD1 domain N-terminus; it reads MALTAALKAQ…PDLKFTAAFG (114 aa). The region spanning 17–294 is the Helicase ATP-binding domain; that stretch reads ALQEQIPDFI…TCMEQFRPKT (278 aa). 4 residues coordinate ATP: Ile-26, Gln-31, Lys-60, and Thr-61. The interval 115-216 is [4Fe-4S] domain; sequence RGRYVCPRNL…FFVARREIQE (102 aa). Residues Cys-120, Cys-194, Cys-199, and Cys-205 each coordinate [4Fe-4S] cluster. Residues 217–261 form an HD1 domain middle region; the sequence is AEVVVANHALVMAAMESEAVLPDPKNLLLVLDEGHHLPDVARDAL. The short motif at 248–251 is the DEAH box element; sequence DEGH. The interval 262-438 is arch domain; the sequence is EMSAEITAPW…LHLWFHCVGI (177 aa). The interval 439-491 is HD1 domain middle; it reads RVSDQLERLLWRSIPHIIVTSATLRSLNSFSRLQEMSGLKEKAGDRFVALDSP. The HD2 domain stretch occupies residues 492–716; sequence FNHCEQGKIV…KTKSPRRRRR (225 aa). ATP is bound by residues Asp-599, Arg-656, and Arg-659.

The protein belongs to the helicase family. DinG subfamily. Type 1 sub-subfamily. As to quaternary structure, monomer in solution. [4Fe-4S] cluster is required as a cofactor. Requires Mg(2+) as cofactor.

It catalyses the reaction Couples ATP hydrolysis with the unwinding of duplex DNA at the replication fork by translocating in the 5'-3' direction. This creates two antiparallel DNA single strands (ssDNA). The leading ssDNA polymer is the template for DNA polymerase III holoenzyme which synthesizes a continuous strand.. The catalysed reaction is ATP + H2O = ADP + phosphate + H(+). ATPase activity is 15-fold stimulated by single-stranded DNA (ssDNA). Reduction of the [4Fe-4S] cluster reversibly switches off helicase activity. Remains fully active after exposure to 100-fold excess of hydrogen peroxide, but the [4Fe-4S] cluster can be efficiently modified by nitric oxide (NO), forming the DinG-bound dinitrosyl iron complex with the concomitant inactivation of helicase activity. Helicase activity on G-quadruplex DNA is inhibited by porphyrin derivatives meso-tetra (N-methyl-4-pyridyl) porphine tetra tosylate (T4) and N-methyl mesoporphyrin IX (NMM). Helicase activity on forked duplexes is not inhibited by T4 or NMM. G-quadruplex ligands such as Pyridostatin, PhenDC3, BRACO-19 and Netropsin can alter recognition and unwinding of G-quadruplex DNAs; the effect is both ligand- and G-quadruplex DNA-specific. Functionally, DNA-dependent ATPase and 5'-3' DNA helicase. Can also unwind DNA:RNA hybrid duplexes. Is active on D-loops, R-loops, and on forked structures. Unwinds G-quadruplex DNA in a 5'-3' direction; unwinding efficiency differs on different substrates. Does not appear to unwind replication forks or Holliday junctions. Translocates on single-stranded (ss)DNA with a 5'-3' polarity. In vitro at high concentrations also unwinds in a 3'-5' direction. May be involved in recombinational DNA repair and the resumption of replication after DNA damage. The [4Fe-4S] cluster is redox active at cellular potentials and is involved in DNA-mediated charge-transport signaling between DNA repair proteins from distinct pathways. DinG cooperates at long-range with endonuclease III, a base excision repair enzyme, using DNA charge transport to redistribute to regions of DNA damage. Binds 10-11 nucleotides of ssDNA in a positively-charged groove across the helicase domains. The sequence is that of ATP-dependent DNA helicase DinG from Escherichia coli (strain K12).